Reading from the N-terminus, the 599-residue chain is DNA topoisomerase 4 subunit B (599 aa).

ATP contacts are provided by residues Y6, N51, D77, 110-116 (GLNGVGT), and K311. The 111-residue stretch at 397–507 (TMIFLTEGDS…NGHMYILETP (111 aa)) folds into the Toprim domain. The Mg(2+) site is built by E403, D472, and D474.

This sequence belongs to the type II topoisomerase family. As to quaternary structure, heterotetramer composed of ParC and ParE. It depends on Mg(2+) as a cofactor. Requires Mn(2+) as cofactor. Ca(2+) is required as a cofactor.

It carries out the reaction ATP-dependent breakage, passage and rejoining of double-stranded DNA.. Topoisomerase IV is essential for chromosome segregation. It relaxes supercoiled DNA. Performs the decatenation events required during the replication of a circular DNA molecule. In Borreliella burgdorferi (strain ATCC 35210 / DSM 4680 / CIP 102532 / B31) (Borrelia burgdorferi), this protein is DNA topoisomerase 4 subunit B (parE).